The sequence spans 305 residues: MVEPTAFIDEKIAEIADDVGDANAVIALSGGVDSSTAAALAYEAIGDQLTPVYVDTGLMRKGETDQIRDTFDYMDSLRIIDARDRFLDALSGITDPEEKRHAIGEQFIREFETVARDVDADYLVQGTIYPDRIESEGTIKSHHNVGGLPEVVDFEGIVEPMRDLYKDEVREVARELDLESIIAERMPFPGPGLAIRVLGEVTDEKLAVAREANHVVEEELEEYEPWQALAAVLGKATGVKGDNRVHGWVVSVRSVESRDGMTARAQELDWETLQRIQSRITGENENVARVVYDVTHKPPATIEYE.

Residues 2-185 enclose the GMPS ATP-PPase domain; the sequence is VEPTAFIDEK…LDLESIIAER (184 aa). 29–35 is an ATP binding site; the sequence is SGGVDSS.

Heterodimer composed of a glutamine amidotransferase subunit (A) and a GMP-binding subunit (B).

It catalyses the reaction XMP + L-glutamine + ATP + H2O = GMP + L-glutamate + AMP + diphosphate + 2 H(+). Its pathway is purine metabolism; GMP biosynthesis; GMP from XMP (L-Gln route): step 1/1. Catalyzes the synthesis of GMP from XMP. The protein is GMP synthase [glutamine-hydrolyzing] subunit B of Natronomonas pharaonis (strain ATCC 35678 / DSM 2160 / CIP 103997 / JCM 8858 / NBRC 14720 / NCIMB 2260 / Gabara) (Halobacterium pharaonis).